Here is a 387-residue protein sequence, read N- to C-terminus: uncharacterized protein (387 aa).

An N-terminal signal peptide occupies residues Met-1–Ser-27.

This is an uncharacterized protein from Bacillus subtilis (strain 168).